The following is a 444-amino-acid chain: Tryptophan 5-hydroxylase 1 (444 aa).

Residues 19 to 94 (SLIFSLKNEV…NVLSVNLPDN (76 aa)) form the ACT domain. Position 58 is a phosphoserine; by PKA (S58). L-tryptophan-binding residues include Y235, R257, and T265. Fe cation contacts are provided by H272, H277, and E317. L-tryptophan-binding residues include S336 and I366.

This sequence belongs to the biopterin-dependent aromatic amino acid hydroxylase family. In terms of assembly, homotetramer. Interacts with DNAJC12. It depends on Fe(2+) as a cofactor. In terms of processing, ubiquitinated, leading to its degradation by the proteasome. Ubiquitinated is triggered by phosphorylation. Post-translationally, phosphorylated; triggering degradation by the proteasome. Seems to be less widely expressed than isoform 1.

The enzyme catalyses (6R)-L-erythro-5,6,7,8-tetrahydrobiopterin + L-tryptophan + O2 = 5-hydroxy-L-tryptophan + (4aS,6R)-4a-hydroxy-L-erythro-5,6,7,8-tetrahydrobiopterin. It functions in the pathway aromatic compound metabolism; serotonin biosynthesis; serotonin from L-tryptophan: step 1/2. In terms of biological role, oxidizes L-tryptophan to 5-hydroxy-l-tryptophan in the rate-determining step of serotonin biosynthesis. The protein is Tryptophan 5-hydroxylase 1 (TPH1) of Homo sapiens (Human).